The primary structure comprises 904 residues: Toll-like receptor 3 (904 aa).

Residues 1-26 form the signal peptide; that stretch reads MSRPLPYHIYFFTGLLTCWILCTSSA. The LRRNT domain occupies 27–52; that stretch reads HKCTVRHEVADCSHLKLTQIPEDLPT. At 27–705 the chain is on the lumenal side; sequence HKCTVRHEVA…PCKDSAPFEL (679 aa). Residues Cys-29 and Cys-38 are joined by a disulfide bond. Asn-53, Asn-58, and Asn-71 each carry an N-linked (GlcNAc...) asparagine glycan. 6 LRR repeats span residues 53–74, 77–98, 101–122, 125–146, 149–170, and 173–196; these read NITV…NFTR, RLTI…LCQN, WLEI…TFVF, NLTE…PFKN, NLIK…TQLQ, and NLQE…DFLG. A disulfide bond links Cys-96 and Cys-123. The N-linked (GlcNAc...) asparagine glycan is linked to Asn-125. Residue Asn-197 is glycosylated (N-linked (GlcNAc...) asparagine). 2 LRR repeats span residues 199 to 220 and 223 to 245; these read SLER…CFHA and KLSG…LCLE. N-linked (GlcNAc...) asparagine glycans are attached at residues Asn-248, Asn-253, Asn-276, and Asn-292. LRR repeat units follow at residues 250–271, 276–297, 300–321, 324–345, 357–378, 381–401, 409–430, 433–455, 466–487, 508–529, 532–553, 564–585, 588–609, and 612–633; these read SIEN…TFSG, NLTT…SFAW, HLEY…SFYG, NLRH…TSLP, CLEY…TFTG, RLKF…TNET, PLLL…AFSW, HLEV…EWRG, YNKY…QRLM, NLVI…LLKG, KLEI…ANPG, HLRI…AFKD, ELKS…VFDN, and SLKS…VFGP. Residues Asn-399 and Asn-414 are each glycosylated (N-linked (GlcNAc...) asparagine). Residues Asn-637, Asn-663, and Asn-668 are each glycosylated (N-linked (GlcNAc...) asparagine). The region spanning 646 to 699 is the LRRCT domain; the sequence is NPFDCTCESIAWFVNWINSTHTNISELSNHYLCNTPPQYHGFPVMLFDVSPCKD. Cystine bridges form between Cys-650–Cys-678 and Cys-652–Cys-697. The chain crosses the membrane as a helical span at residues 706-726; the sequence is LFMINTNILLIFIFIVLLIHF. Residues 727 to 904 lie on the Cytoplasmic side of the membrane; sequence EGWRISFYWN…VALGSRNSAH (178 aa). A TIR domain is found at 754–897; the sequence is FEYAAYIIHA…AFHHKLKVAL (144 aa). The residue at position 759 (Tyr-759) is a Phosphotyrosine. Residues Lys-812 and Lys-831 each participate in a glycyl lysine isopeptide (Lys-Gly) (interchain with G-Cter in ubiquitin) cross-link. The residue at position 858 (Tyr-858) is a Phosphotyrosine.

It belongs to the Toll-like receptor family. Monomer and homodimer; dimerization is triggered by ligand-binding and is required for TLR3 signaling. Interacts (via transmembrane domain) with UNC93B1. Interacts with TICAM1 (via the TIR domain) in response to poly(I:C) and this interaction is enhanced the presence of WDFY1. Interacts with SRC; upon binding of double-stranded RNA. The tyrosine-phosphorylated form (via TIR domain) interacts with WDFY1 (via WD repeat 2) in response to poly(I:C). Ubiquitinated by TRIM3; leading to recognition and sorting of polyubiquitinated TLR3 by the ESCRT complexes. Ubiquitinated by ZNRF1 via 'Lys-63'-linked ubiquitin chains; leading to TLR3 lysosomal trafficking and degradation.

Its subcellular location is the endoplasmic reticulum membrane. It localises to the endosome membrane. It is found in the early endosome. Key component of innate and adaptive immunity. TLRs (Toll-like receptors) control host immune response against pathogens through recognition of molecular patterns specific to microorganisms. TLR3 is a nucleotide-sensing TLR which is activated by double-stranded RNA, a sign of viral infection. Acts via the adapter TRIF/TICAM1, leading to NF-kappa-B activation, cytokine secretion and the inflammatory response. This Boselaphus tragocamelus (Nilgai) protein is Toll-like receptor 3 (TLR3).